We begin with the raw amino-acid sequence, 728 residues long: Cytosolic endo-beta-N-acetylglucosaminidase (728 aa).

The region spanning Q287–W381 is the BRCT domain.

This sequence belongs to the glycosyl hydrolase 85 family.

Its subcellular location is the cytoplasm. The protein resides in the cytosol. The catalysed reaction is an N(4)-(oligosaccharide-(1-&gt;3)-[oligosaccharide-(1-&gt;6)]-beta-D-Man-(1-&gt;4)-beta-D-GlcNAc-(1-&gt;4)-alpha-D-GlcNAc)-L-asparaginyl-[protein] + H2O = an oligosaccharide-(1-&gt;3)-[oligosaccharide-(1-&gt;6)]-beta-D-Man-(1-&gt;4)-D-GlcNAc + N(4)-(N-acetyl-beta-D-glucosaminyl)-L-asparaginyl-[protein]. In terms of biological role, endoglycosidase that releases N-glycans from glycoproteins by cleaving the beta-1,4-glycosidic bond in the N,N'-diacetylchitobiose core. Involved in the processing of free oligosaccharides in the cytosol. The sequence is that of Cytosolic endo-beta-N-acetylglucosaminidase (ENGASE) from Gallus gallus (Chicken).